Consider the following 188-residue polypeptide: MGIDISHKHDRVARRTAPKSENPYLRLLSKLYAFLARRTGEKFNAIVLKRLRMSRRNRQPLSLAKVARVVKQAGNEKKTVVTLSTVTDDARLYEVPKISLAALHVTEGARARILAAGGEIITLDQLALRSPKGENTVFLQGPRSAREAEKHFGPAPGVPHSHTKPHVRSKGRKFERARGRRASRAYKN.

Residues 143–188 (RSAREAEKHFGPAPGVPHSHTKPHVRSKGRKFERARGRRASRAYKN) are disordered. Composition is skewed to basic residues over residues 161 to 171 (SHTKPHVRSKG) and 178 to 188 (RGRRASRAYKN).

Belongs to the eukaryotic ribosomal protein eL18 family.

It is found in the cytoplasm. This Caenorhabditis briggsae protein is Large ribosomal subunit protein eL18 (rpl-18).